The sequence spans 1057 residues: Carbamoyl phosphate synthase large chain (1057 aa).

The interval 1–401 (MPKRDDIKTI…SLLKAIRSLE (401 aa)) is carboxyphosphate synthetic domain. ATP contacts are provided by Arg-129, Arg-169, Gly-175, Gly-176, Lys-208, Ile-210, Glu-215, Gly-241, Ile-242, His-243, Gln-284, and Glu-298. Residues 133–327 (RTLMNDLNVP…IAKLAAKIAV (195 aa)) enclose the ATP-grasp 1 domain. Residues Gln-284, Glu-298, and Asn-300 each contribute to the Mg(2+) site. Mn(2+)-binding residues include Gln-284, Glu-298, and Asn-300. The tract at residues 402 to 546 (YGVHHLGLSN…YGTYEYENES (145 aa)) is oligomerization domain. Positions 547 to 929 (IVTDKEKILV…ALYKGLTGSG (383 aa)) are carbamoyl phosphate synthetic domain. The 191-residue stretch at 671 to 861 (EALLREIAVP…MAQLAMRAIM (191 aa)) folds into the ATP-grasp 2 domain. ATP is bound by residues Arg-707, Arg-746, Leu-748, Glu-752, Gly-777, Val-778, His-779, Ser-780, Gln-820, and Glu-832. Mg(2+)-binding residues include Gln-820, Glu-832, and Asn-834. 3 residues coordinate Mn(2+): Gln-820, Glu-832, and Asn-834. The 128-residue stretch at 930 to 1057 (FEVKDHGTVL…ESMTFTMRNV (128 aa)) folds into the MGS-like domain. Positions 930–1057 (FEVKDHGTVL…ESMTFTMRNV (128 aa)) are allosteric domain.

This sequence belongs to the CarB family. In terms of assembly, composed of two chains; the small (or glutamine) chain promotes the hydrolysis of glutamine to ammonia, which is used by the large (or ammonia) chain to synthesize carbamoyl phosphate. Tetramer of heterodimers (alpha,beta)4. Requires Mg(2+) as cofactor. It depends on Mn(2+) as a cofactor.

The enzyme catalyses hydrogencarbonate + L-glutamine + 2 ATP + H2O = carbamoyl phosphate + L-glutamate + 2 ADP + phosphate + 2 H(+). It carries out the reaction hydrogencarbonate + NH4(+) + 2 ATP = carbamoyl phosphate + 2 ADP + phosphate + 2 H(+). It participates in amino-acid biosynthesis; L-arginine biosynthesis; carbamoyl phosphate from bicarbonate: step 1/1. It functions in the pathway pyrimidine metabolism; UMP biosynthesis via de novo pathway; (S)-dihydroorotate from bicarbonate: step 1/3. In terms of biological role, large subunit of the glutamine-dependent carbamoyl phosphate synthetase (CPSase). CPSase catalyzes the formation of carbamoyl phosphate from the ammonia moiety of glutamine, carbonate, and phosphate donated by ATP, constituting the first step of 2 biosynthetic pathways, one leading to arginine and/or urea and the other to pyrimidine nucleotides. The large subunit (synthetase) binds the substrates ammonia (free or transferred from glutamine from the small subunit), hydrogencarbonate and ATP and carries out an ATP-coupled ligase reaction, activating hydrogencarbonate by forming carboxy phosphate which reacts with ammonia to form carbamoyl phosphate. This chain is Carbamoyl phosphate synthase large chain, found in Staphylococcus epidermidis (strain ATCC 12228 / FDA PCI 1200).